The primary structure comprises 123 residues: Small ribosomal subunit protein uS12cz/uS12cy (123 aa).

It belongs to the universal ribosomal protein uS12 family. In terms of assembly, part of the 30S ribosomal subunit.

The protein localises to the plastid. Its subcellular location is the chloroplast. With S4 and S5 plays an important role in translational accuracy. Located at the interface of the 30S and 50S subunits. This Nymphaea alba (White water-lily) protein is Small ribosomal subunit protein uS12cz/uS12cy (rps12-A).